A 539-amino-acid chain; its full sequence is Serine/threonine-protein kinase 35 (539 aa).

Positions Ile-103–Val-161 are disordered. Positions Arg-148–Pro-160 are enriched in basic residues. The 329-residue stretch at Tyr-207 to Val-535 folds into the Protein kinase domain. Residues Ile-213–Val-221 and Lys-236 each bind ATP. Asp-365 functions as the Proton acceptor in the catalytic mechanism.

It belongs to the protein kinase superfamily. Ser/Thr protein kinase family. In terms of assembly, interacts with PDLIM1/CLP-36. Autophosphorylated.

The protein localises to the nucleus. It localises to the nucleolus. It is found in the cytoplasm. It carries out the reaction L-seryl-[protein] + ATP = O-phospho-L-seryl-[protein] + ADP + H(+). The catalysed reaction is L-threonyl-[protein] + ATP = O-phospho-L-threonyl-[protein] + ADP + H(+). The chain is Serine/threonine-protein kinase 35 (Stk35) from Mus musculus (Mouse).